The following is a 1071-amino-acid chain: SLIT-ROBO Rho GTPase-activating protein 2 (1071 aa).

One can recognise an F-BAR domain in the interval 22–325 (KEIRAQLTEQ…AVENLDATSD (304 aa)). A compositionally biased stretch (basic and acidic residues) spans 181–203 (LKEAEKQEEKQIGKSVKQEDRQT). Positions 181–211 (LKEAEKQEEKQIGKSVKQEDRQTPRSPDSTA) are disordered. The residue at position 206 (Ser206) is a Phosphoserine. A coiled-coil region spans residues 362-401 (VQSELVQRCQQLQSRLSTLKIENEEVKKTMEATLQTIQDI). Phosphoserine is present on residues Ser427, Ser500, Ser691, and Ser695. The Rho-GAP domain occupies 489 to 679 (ARRSSTVRKQ…TIIIQHENIF (191 aa)). Residues 698-726 (DYCDSPHGETTSVEDSTQDVTAEHHTSDD) are disordered. Polar residues predominate over residues 705–717 (GETTSVEDSTQDV). Ser724 is subject to Phosphoserine. The region spanning 728-787 (CEPIEAIAKFDYVGRTARELSFKKGASLLLYQRASDDWWEGRHNGIDGLIPHQYIVVQDT) is the SH3 domain. At Ser795 the chain carries Phosphoserine. Residues 837 to 936 (QRKRPESGSI…RSKSFNNHRP (100 aa)) are disordered. The segment covering 855 to 866 (HGLSSSLTDSSS) has biased composition (low complexity). Composition is skewed to polar residues over residues 874–885 (RPSSQPIMSQSL) and 897–907 (GHGSLNSISRH). At Ser916 the chain carries Phosphoserine. Positions 919–933 (IRKTATAGRSKSFNN) are enriched in polar residues. Symmetric dimethylarginine; by PRMT5 is present on Arg927. Position 930 is a phosphoserine (Ser930). Residues 940-967 (EVIAQDIEATMNSALNELRELERQSSVK) adopt a coiled-coil conformation. The tract at residues 983–1012 (SPVVAPTSEPSSPLHTQLLKDPEPAFQRSA) is disordered. Ser990, Ser994, Ser1013, and Ser1027 each carry phosphoserine. Residues 1029–1071 (KMAAPVKPPATRPKPTVFPKTNATSPGVNSSTSPQSTDKSCTV) form a disordered region. Positions 1047-1071 (PKTNATSPGVNSSTSPQSTDKSCTV) are enriched in polar residues.

Homodimer. Heterodimer; forms a heterodimer with SRGAP2C, altering SRGAP2 function. Forms a heterooligomer with SRGAP1 and SRGAP3 through its F-BAR domain. Interacts (via SH3 domain) with GPHN. Interacts (via SH3 domain) with FMNL1 (activated by RAC1); regulates the actin filament severing activity of FMNL1 and actin dynamics. Interacts (via SH3 domain) with FMNL3. Interacts with RAC1; specifically stimulates RAC1 GTPase activity. Interacts (via F-BAR domain) with HOMER1. Interacts with ROBO1 and ROBO2. Interacts with FASLG. Interacts with PRMT5. Post-translationally, methylation at Arg-927 is required for the stimulation of cell migration, dimerization and localization at the plasma membrane protrusions.

The protein localises to the cell membrane. It is found in the cell projection. It localises to the dendritic spine. Its subcellular location is the postsynaptic density. The protein resides in the postsynaptic cell membrane. The protein localises to the lamellipodium. It is found in the cytoplasmic vesicle. It localises to the phagosome. Its subcellular location is the nucleus. The protein resides in the cytoplasm. The protein localises to the cytosol. With respect to regulation, activity is strongly inhibited by SRGAP2C, which heterodimerize with SRGAP2/SRGAP2A, thereby reducing SRGAP2/SRGAP2A levels through proteasome-dependent degradation. Functionally, postsynaptic RAC1 GTPase activating protein (GAP) that plays a key role in neuronal morphogenesis and migration mainly during development of the cerebral cortex. Regulates excitatory and inhibitory synapse maturation and density in cortical pyramidal neurons. SRGAP2/SRGAP2A limits excitatory and inhibitory synapse density through its RAC1-specific GTPase activating activity, while it promotes maturation of both excitatory and inhibitory synapses through its ability to bind to the postsynaptic scaffolding protein HOMER1 at excitatory synapses, and the postsynaptic protein GPHN at inhibitory synapses. Mechanistically, acts by binding and deforming membranes, thereby regulating actin dynamics to regulate cell migration and differentiation. Promotes cell repulsion and contact inhibition of locomotion: localizes to protrusions with curved edges and controls the duration of RAC1 activity in contact protrusions. In non-neuronal cells, may also play a role in cell migration by regulating the formation of lamellipodia and filopodia. The sequence is that of SLIT-ROBO Rho GTPase-activating protein 2 from Homo sapiens (Human).